A 580-amino-acid polypeptide reads, in one-letter code: Type II methyltransferase M.BanIII (580 aa).

Belongs to the N(4)/N(6)-methyltransferase family.

The enzyme catalyses a 2'-deoxyadenosine in DNA + S-adenosyl-L-methionine = an N(6)-methyl-2'-deoxyadenosine in DNA + S-adenosyl-L-homocysteine + H(+). A gamma subtype methylase, recognizes the double-stranded sequence 5'-ATCGAT-3', methylates A-5 on both strands, and protects the DNA from cleavage by the BanIII endonuclease. The protein is Type II methyltransferase M.BanIII (banIIIM) of Aneurinibacillus aneurinilyticus (Bacillus aneurinolyticus).